The chain runs to 343 residues: Calcium/calmodulin-dependent protein kinase type 1B (343 aa).

The Protein kinase domain occupies 15 to 270 (YEIREKLGSG…CQQALQHLWI (256 aa)). Residues 21–29 (LGSGAFSEV) and lysine 44 each bind ATP. Catalysis depends on aspartate 136, which acts as the Proton acceptor. Positions 290-311 (KNFARTHWKRAFNATSFLRHIR) are calmodulin-binding. The interval 314-343 (GQSPEGEEASRQCMTRHSHPGLGTSQSPKW) is disordered. At serine 338 the chain carries Phosphoserine.

It belongs to the protein kinase superfamily. CAMK Ser/Thr protein kinase family. CaMK subfamily. As to expression, expressed at highest levels in adult brain, and expressed in embryo. In the adult brain detected at high levels in the anterior olfactory nuclei, piriform cortex, septal nuclei, bed nuclei of the stria terminalis, hippocampal pyramidal cells, dentate granule cells, amygdala, hypothalamic nuclei, parabrachial nucleus, and nucleus of the solitary tract. Expressed at lower levels in adult ovary and heart and at very low levels in testis, lung and muscle.

It localises to the cytoplasm. The protein resides in the nucleus. The catalysed reaction is L-seryl-[protein] + ATP = O-phospho-L-seryl-[protein] + ADP + H(+). It catalyses the reaction L-threonyl-[protein] + ATP = O-phospho-L-threonyl-[protein] + ADP + H(+). With respect to regulation, activated by Ca(2+)/calmodulin. Functionally, calcium/calmodulin-dependent protein kinase belonging to a proposed calcium-triggered signaling cascade. In vitro phosphorylates CREB1 and SYN1/synapsin I. Phosphorylates and activates CAMK1. The sequence is that of Calcium/calmodulin-dependent protein kinase type 1B (Pnck) from Mus musculus (Mouse).